The primary structure comprises 891 residues: Protein kinase kin1 (891 aa).

The disordered stretch occupies residues 65–116 (GYISPSSQSPHHGPVRSPSSRKPLPASPSRTRDHSLRVPVSGHSYSADEKPR). One can recognise a Protein kinase domain in the interval 125 to 395 (YVLGKTIGAG…LEEVLNHPWM (271 aa)). ATP is bound by residues 131-139 (IGAGSMGKV) and lysine 154. Catalysis depends on aspartate 266, which acts as the Proton acceptor. Threonine 528 is modified (phosphothreonine). 3 disordered regions span residues 528-699 (TPVS…RNNR), 728-747 (TMGN…TDKL), and 805-841 (TPTK…LDDN). Composition is skewed to low complexity over residues 529–538 (PVSSVPSSPV) and 583–603 (HSPS…IFRR). Phosphoserine occurs at positions 535 and 536. Composition is skewed to polar residues over residues 612-629 (KSST…TSQS), 649-659 (LVTQSAIGRST), 669-699 (ISSQ…RNNR), 728-742 (TMGN…SPSK), and 820-829 (YGSNSTTDSY). A KA1 domain is found at 842-891 (GESPASNLAFEIYIVKVPILSLRGVSFHRISGNSWQYKTLASRILNELKL).

This sequence belongs to the protein kinase superfamily. Ser/Thr protein kinase family.

Its subcellular location is the cytoplasm. The catalysed reaction is L-seryl-[protein] + ATP = O-phospho-L-seryl-[protein] + ADP + H(+). It catalyses the reaction L-threonyl-[protein] + ATP = O-phospho-L-threonyl-[protein] + ADP + H(+). Its function is as follows. Has a role in establishing the characteristic rod cell shape. Important for cell polarity and is involved in directing growth to the cell ends. The polypeptide is Protein kinase kin1 (kin1) (Schizosaccharomyces pombe (strain 972 / ATCC 24843) (Fission yeast)).